The chain runs to 164 residues: Glycine cleavage system H protein, mitochondrial (164 aa).

A mitochondrion-targeting transit peptide spans 1–39; that stretch reads MAWLVLRRLGPVLAPRCPRLSLRPQVPAVRRLGTGSLLL. Residues 57-139 form the Lipoyl-binding domain; that stretch reads IGTVGISNFA…YQDGWLIKMT (83 aa). The residue at position 98 (Lys98) is an N6-lipoyllysine.

The protein belongs to the GcvH family. In terms of assembly, the glycine cleavage system is composed of four proteins: P (GLDC), T (GCST), L (DLD) and H (GCSH). Interacts with GLDC. The cofactor is (R)-lipoate.

The protein localises to the mitochondrion. The glycine cleavage system catalyzes the degradation of glycine. The H protein (GCSH) shuttles the methylamine group of glycine from the P protein (GLDC) to the T protein (GCST). Has a pivotal role in the lipoylation of enzymes involved in cellular energetics such as the mitochondrial dihydrolipoyllysine-residue acetyltransferase component of pyruvate dehydrogenase complex (DLAT), and the mitochondrial dihydrolipoyllysine-residue succinyltransferase component of 2-oxoglutarate dehydrogenase complex (DLST). The chain is Glycine cleavage system H protein, mitochondrial from Gallus gallus (Chicken).